The chain runs to 501 residues: ADP,ATP carrier protein 3 (501 aa).

12 consecutive transmembrane segments (helical) span residues 23-43 (LKLF…FGAL), 59-79 (IISF…TVLY), 90-110 (YIFY…AYII), 146-166 (YALM…LMFW), 183-203 (PVLG…LVFF), 227-247 (IMLQ…MLLF), 293-313 (IALL…PWKA), 326-346 (VNFM…FMII), 361-381 (LLTP…IIFI), 387-407 (CFGD…QNIL), 446-466 (FGKS…PTAT), and 470-490 (IIIY…WNVI).

The protein belongs to the ADP/ATP translocase tlc family.

It is found in the cell membrane. Functionally, provides the rickettsial cell with host ATP in exchange for rickettsial ADP. This is an obligate exchange system. This energy acquiring activity is an important component of rickettsial parasitism. This Rickettsia conorii (strain ATCC VR-613 / Malish 7) protein is ADP,ATP carrier protein 3 (tlcC).